A 509-amino-acid polypeptide reads, in one-letter code: MNNTISPGEVLKVIKERIENFDNQVKSDSVGEVISIKDGIALIYGLEKAKFGEVVVFANGITGIVLGLDCDTASVVVFGDERSVGEGDTAKCTGKLMDVPVGLELLGRVVDALGNPIDGAGSIDSKTRLPVEIKAPGIIARQSVTEPLQTGIKIIDMLIPIGRGQRELIIGDRKTGKTAIAIDTIINQKAHNDVVSEKEKVYCIYVAIGQKNSSVARIVDKLRVSGALEYTIVVAAGASDTVSFQYLAPYAACAMGEFFRDNGMHCLIVYDDLSKHAVAYRQMSLLLRRPPGREAYPGDVFFLHSRLLERAAKMSDKEGGGSLTALPIIETQAGDVSAYVPTNVISITDGQIFLESEIFYKGLRPAVNVGLSVSRVGSAAQTKSVKKVAGSVKLSLAQYRELEDFAKFGSDIDVHSQKVLDRGRRMMELLKQKQYSPLSVPEQVAVIFAGTSGCLDGVSVSDISRFEEMLLKELNENYPDVLSSILNNFTDDVKDLLLEIIGKVTSNFE.

An ATP-binding site is contributed by 171 to 178 (GDRKTGKT).

This sequence belongs to the ATPase alpha/beta chains family. In terms of assembly, F-type ATPases have 2 components, CF(1) - the catalytic core - and CF(0) - the membrane proton channel. CF(1) has five subunits: alpha(3), beta(3), gamma(1), delta(1), epsilon(1). CF(0) has three main subunits: a(1), b(2) and c(9-12). The alpha and beta chains form an alternating ring which encloses part of the gamma chain. CF(1) is attached to CF(0) by a central stalk formed by the gamma and epsilon chains, while a peripheral stalk is formed by the delta and b chains.

The protein resides in the cell inner membrane. It catalyses the reaction ATP + H2O + 4 H(+)(in) = ADP + phosphate + 5 H(+)(out). In terms of biological role, produces ATP from ADP in the presence of a proton gradient across the membrane. The alpha chain is a regulatory subunit. This chain is ATP synthase subunit alpha, found in Ehrlichia chaffeensis (strain ATCC CRL-10679 / Arkansas).